The sequence spans 702 residues: ATP-dependent zinc metalloprotease FtsH (702 aa).

Topologically, residues 1 to 26 (MKKRNKGLVEQTTTEKNNFSRKTAWK) are cytoplasmic. A helical transmembrane segment spans residues 27–47 (VFWWVIILAVVIGVLAYIFSP). Topologically, residues 48-175 (RAATAVVESW…FIAPDTRARD (128 aa)) are extracellular. The helical transmembrane segment at 176–196 (VLNGLFGLLPIIIFVVFFLLF) threads the bilayer. Over 197-702 (WRSARGISAG…EVKPESETNS (506 aa)) the chain is Cytoplasmic. Residue 271 to 278 (GPPGTGKT) participates in ATP binding. Histidine 493 is a Zn(2+) binding site. The active site involves glutamate 494. Residues histidine 497 and aspartate 572 each contribute to the Zn(2+) site. The segment at 682 to 702 (EQQAKQKLNKSEVKPESETNS) is disordered. A compositionally biased stretch (basic and acidic residues) spans 690–702 (NKSEVKPESETNS).

The protein in the central section; belongs to the AAA ATPase family. It in the C-terminal section; belongs to the peptidase M41 family. As to quaternary structure, homohexamer. Zn(2+) serves as cofactor.

It is found in the cell membrane. Its function is as follows. Acts as a processive, ATP-dependent zinc metallopeptidase for both cytoplasmic and membrane proteins. Plays a role in the quality control of integral membrane proteins. In Mycoplasma genitalium (strain ATCC 33530 / DSM 19775 / NCTC 10195 / G37) (Mycoplasmoides genitalium), this protein is ATP-dependent zinc metalloprotease FtsH.